A 525-amino-acid polypeptide reads, in one-letter code: Golgi resident protein GCP60 (525 aa).

Residue Ala-2 is modified to N-acetylalanine. The tract at residues 12–68 is disordered; that stretch reads VSLDGLTLSPDSEERPGAEGAPPQTPPSSAPGNGLGSGASGQQREPGEAAAEGAAEE. Position 13 is a phosphoserine (Ser-13). Thr-18 is subject to Phosphothreonine. Phosphoserine is present on residues Ser-20 and Ser-40. A compositionally biased stretch (low complexity) spans 52–64; it reads GQQREPGEAAAEG. Residues 80–171 enclose the ACB domain; sequence LEELYGLALR…LNKCCPLLSA (92 aa). Residues 169–254 adopt a coiled-coil conformation; the sequence is LSAYVASHRI…AALNSQTAVQ (86 aa). A disordered region spans residues 180 to 226; that stretch reads KEEEEKRRKAEEERRQREEEERERLQKEEEKRKREKEDRLRREEEER. The segment at 238–305 is q domain; Interaction with PI4KB, TBC1D22A and TBC1D22B; sequence QQKQQIMAAL…QQQAALQKQQ (68 aa). Residues 319–336 show a composition bias toward polar residues; it reads KVNTAGASDTLSVNGQAK. The segment at 319-346 is disordered; that stretch reads KVNTAGASDTLSVNGQAKTHTENSEKVL. The segment covering 337–346 has biased composition (basic and acidic residues); that stretch reads THTENSEKVL. A GOLD domain is found at 381 to 523; sequence KEKIRQDADS…SKSVYYRVYY (143 aa). The stretch at 448-470 forms a coiled coil; it reads SDEEEEEEENVTCEEKAKKNANK.

In terms of assembly, homodimer. Interacts with the C-terminal cytoplasmic domain of giantin/GOLGB1. Interacts with PBR and PKA regulatory subunit RI-alpha. Does not interact with PKA regulatory subunit RI-beta nor PKA regulatory subunit RII-alpha. Interacts (via Q domain) with PI4KB (via N-terminus). Interacts (via Q domain) with TBC1D22A and TBC1D22B; interactions with PI4KB and with TBC1D22A and TBC1D22B are mutually exclusive. Interacts with C10ORF76 and RAB11B. In terms of tissue distribution, expressed in brain (hippocampus, olfactory bulb, neuronal and glial cells of the cortex), eye, submaxillary gland, testis (interstitial and tubular compartments), ovary (granulosa cells, theca cells at late stages and primary follicles), adrenal gland (fasciculata and glomerulosa cells), heart, liver, and steroidogenic cell lines.

The protein resides in the golgi apparatus membrane. It localises to the mitochondrion. In terms of biological role, involved in the maintenance of Golgi structure by interacting with giantin, affecting protein transport between the endoplasmic reticulum and Golgi. Involved in hormone-induced steroid biosynthesis in testicular Leydig cells. Recruits PI4KB to the Golgi apparatus membrane; enhances the enzyme activity of PI4KB activity via its membrane recruitment thereby increasing the local concentration of the substrate in the vicinity of the kinase. The protein is Golgi resident protein GCP60 (Acbd3) of Mus musculus (Mouse).